A 582-amino-acid chain; its full sequence is DNA polymerase IV (582 aa).

Residues 127–161 (NADDGQSSTDKESEISTDVESERNDDSNNKDMIQA) form a disordered region. The segment covering 135 to 155 (TDKESEISTDVESERNDDSNN) has biased composition (basic and acidic residues). The involved in ssDNA binding stretch occupies residues 360 to 369 (RGYSKCGDID). Residues aspartate 367, aspartate 369, and aspartate 502 each coordinate Mg(2+).

The protein belongs to the DNA polymerase type-X family. In terms of assembly, interacts with DNL4 subunit of the DNL4-LIF1 complex. Mg(2+) is required as a cofactor.

The protein resides in the nucleus. The catalysed reaction is DNA(n) + a 2'-deoxyribonucleoside 5'-triphosphate = DNA(n+1) + diphosphate. Stimulated by the interaction with the DNL4-LIF1 complex. In terms of biological role, repair polymerase. Involved in gap-filling in DNA nonhomologous end joining (NHEJ) required for double-strand break repair. Seems to conduct DNA synthesis in a stepwise distributive fashion rather than in a processive fashion as for other DNA polymerases. Preferentially acts upon short gaps formed by the alignment of linear duplexes with complementary single-strand ends. Required for filling gaps that need removal of a 5'- or 3'-terminal mismatch, however lacks nuclease activities. The chain is DNA polymerase IV (POL4) from Saccharomyces cerevisiae (strain ATCC 204508 / S288c) (Baker's yeast).